We begin with the raw amino-acid sequence, 511 residues long: Maturase K (511 aa).

The protein belongs to the intron maturase 2 family. MatK subfamily.

The protein localises to the plastid. It is found in the chloroplast. Functionally, usually encoded in the trnK tRNA gene intron. Probably assists in splicing its own and other chloroplast group II introns. The polypeptide is Maturase K (Hordeum secalinum (Meadow barley)).